We begin with the raw amino-acid sequence, 213 residues long: Octanoyltransferase (213 aa).

Residues 32–207 (DHTPDEIWLV…KLLALLNNPP (176 aa)) form the BPL/LPL catalytic domain. Residues 71–78 (RGGQVTYH), 138–140 (SLG), and 151–153 (GLA) contribute to the substrate site. Cysteine 169 functions as the Acyl-thioester intermediate in the catalytic mechanism.

It belongs to the LipB family.

The protein resides in the cytoplasm. It carries out the reaction octanoyl-[ACP] + L-lysyl-[protein] = N(6)-octanoyl-L-lysyl-[protein] + holo-[ACP] + H(+). The protein operates within protein modification; protein lipoylation via endogenous pathway; protein N(6)-(lipoyl)lysine from octanoyl-[acyl-carrier-protein]: step 1/2. Catalyzes the transfer of endogenously produced octanoic acid from octanoyl-acyl-carrier-protein onto the lipoyl domains of lipoate-dependent enzymes. Lipoyl-ACP can also act as a substrate although octanoyl-ACP is likely to be the physiological substrate. This is Octanoyltransferase from Enterobacter sp. (strain 638).